We begin with the raw amino-acid sequence, 446 residues long: Phosphoglucosamine mutase (446 aa).

Ser-88 serves as the catalytic Phosphoserine intermediate. Ser-88, Asp-231, Asp-233, and Asp-235 together coordinate Mg(2+). At Ser-88 the chain carries Phosphoserine.

The protein belongs to the phosphohexose mutase family. It depends on Mg(2+) as a cofactor. In terms of processing, activated by phosphorylation.

The catalysed reaction is alpha-D-glucosamine 1-phosphate = D-glucosamine 6-phosphate. Functionally, catalyzes the conversion of glucosamine-6-phosphate to glucosamine-1-phosphate. This chain is Phosphoglucosamine mutase, found in Methanococcus vannielii (strain ATCC 35089 / DSM 1224 / JCM 13029 / OCM 148 / SB).